The chain runs to 690 residues: Subtilisin-like protease 1 (690 aa).

The first 25 residues, 1–25, serve as a signal peptide directing secretion; the sequence is MMLNKKVVALCTLTLHLFCIFLCLG. A propeptide spans 26 to 219 (inhibition peptide); sequence KEVRSEENGK…IESDKLVSAD (194 aa). Positions 99 to 131 are disordered; the sequence is EKNKNDNHNNNNNNNNISSSSSSSSNTFGEEKE. Low complexity predominate over residues 106 to 124; the sequence is HNNNNNNNNISSSSSSSSN. Asn-114 carries N-linked (GlcNAc...) asparagine glycosylation. Ca(2+) contacts are provided by Asn-147, Thr-150, and Pro-152. Residue Asn-173 is glycosylated (N-linked (GlcNAc...) asparagine). A Ca(2+)-binding site is contributed by Gly-207. Asn-263 carries N-linked (GlcNAc...) asparagine glycosylation. 2 disordered regions span residues 266–286 and 305–334; these read HAAT…DTFS and NNNN…RPGK. Over residues 305–330 the composition is skewed to low complexity; it reads NNNNYYYSHSSNGHNSSSRNSSSSRS. N-linked (GlcNAc...) asparagine glycosylation is found at Asn-319 and Asn-324. Glu-340 provides a ligand contact to Ca(2+). One can recognise a Peptidase S8 domain in the interval 345–663; sequence QWGLDLSRLD…AGYADINKAV (319 aa). Intrachain disulfides connect Cys-371–Cys-481 and Cys-460–Cys-477. Catalysis depends on Asp-374, which acts as the Charge relay system. Ca(2+)-binding residues include Asp-383, Glu-394, Arg-398, Phe-401, Asp-402, Asp-403, Asp-404, Asn-406, Ile-408, Asp-410, and Asp-411. Asn-419 carries N-linked (GlcNAc...) asparagine glycosylation. The active-site Charge relay system is the His-430. Ca(2+) is bound by residues Ile-441, Asn-444, Ile-446, and Val-448. N-linked (GlcNAc...) asparagine glycans are attached at residues Asn-490, Asn-503, and Asn-522. Cys-523 and Cys-536 are disulfide-bonded. Asn-605 carries an N-linked (GlcNAc...) asparagine glycan. Catalysis depends on Ser-608, which acts as the Charge relay system. The N-linked (GlcNAc...) asparagine glycan is linked to Asn-677.

Belongs to the peptidase S8 family. As to quaternary structure, heterodimer between p54 form and prodomain p31; the interaction inhibits p54 catalytic activity. Heterodimer p31-p54 is monomeric at basic pH and dimeric at acidic pH; dimerization is driven by the N-terminal prodomain (p31). It depends on Ca(2+) as a cofactor. The prodomain (p31) is cleaved, probably by autocatalysis, during the transport to or in the Golgi apparatus, and remains non-covalently associated with the p54 form as an inhibitor. p54 is further cleaved into the p47 form. This cleavage is likely occurring in the exoneme prior to egress and is mediated by PMX/plasmepsin X. The p54-to-p47 conversion can be also autocatalytic. Heterodimer p31-p54 is activated by cleavage of prodomain (p31) by the aspartic protease PMX; cleavage by PMX abolishes inhibitory capacity of p31. Primary autocatalytic processing of SUB1 is essential for parasite growth; the p54-to-p47 conversion is dispensable for SUB1 functions in the parasites. Post-translationally, the disulfide bond between Cys-523 and Cys-536 acts as a redox-sensitive disulfide switch. The oxidized form is required for catalytic activity. In terms of processing, the relevance of N-glycosylation is not clear. In an insect expression system, SUB1 glycosylation appears to affect its processing into the active mature form suggesting that SUB1 may not be N-glycosylated in parasites.

The protein resides in the secreted. Its subcellular location is the parasitophorous vacuole lumen. It carries out the reaction Hydrolysis of proteins with broad specificity for peptide bonds, and a preference for a large uncharged residue in P1. Hydrolyzes peptide amides.. P54 and probably p47 forms are inhibited by the non-covalent interaction with the cleaved propeptide. Inhibited by subtilisin propeptide-like protein SUB1-ProM. Inhibited by 3,4-dichloroisocoumarin (DCI) and 4-(hydroxymercuri)benzoic acid (pHMB). Partially inhibited by chymostatin, leupeptin, phenylmethylsulfonyl fluoride (PMSF), and 4-(2-aminoethyl)benzenesulfonyl fluoride. In terms of biological role, serine protease which plays an essential role in merozoite invasion of and egress from host erythrocytes by processing and activating various merozoite surface and parasitophorous vacuole proteins. Mediates the proteolytic maturation of serine proteases SERA4, SERA5 and SERA6 just prior to merozoite egress. Prior to merozoite egress, cleaves merozoite surface proteins MSP1, MSP6 and MSP7, which form the MSP1/6/7 complex, and thereby may prime the parasite cell surface for invasion of fresh erythrocytes. Prior to merozoite egress, cleaves MSRP2 converting it to MSRP2 p25 form, and RAP1 converting it to RAP1 p67 form. This Plasmodium falciparum protein is Subtilisin-like protease 1.